A 310-amino-acid polypeptide reads, in one-letter code: Solute carrier family 25 member 47 (310 aa).

3 Solcar repeats span residues 1–80 (MDFV…CLAH), 93–208 (PTKA…LCEW), and 217–304 (PDVL…VLRL). 6 consecutive transmembrane segments (helical) span residues 3-23 (FVAGAIGGVCGVAVGYPLDTV), 55-75 (GLSLPVCTVSLVSSVSFGTYH), 98-114 (ITLSGCASGLVRVFLTS), 194-210 (SFATYFLSYAMLCEWLT), 219-239 (VLGVLVAGGCAGVLAWAVATP), and 280-298 (LALNCCRAFPVNMVVFVAY).

The protein belongs to the mitochondrial carrier (TC 2.A.29) family. As to expression, specifically expressed in liver (at protein level).

The protein localises to the mitochondrion inner membrane. It is found in the mitochondrion outer membrane. It carries out the reaction NAD(+)(in) = NAD(+)(out). It catalyses the reaction acetyl-CoA(in) = acetyl-CoA(out). Functionally, mitochondrial NAD(+) transporter that acts as a 'metabolic gate' in hepatic lipogenesis. Provides NAD(+) substrate to mitochondrial SIRT3 deacetylase and enables its NAD(+)-dependent activities in mitochondrial energy metabolism. This triggers downstream activation of PRKAA1/AMPK-alpha signaling cascade that negatively regulates sterol regulatory element-binding protein (SREBP) transcriptional activities and ATP-consuming lipogenesis to restore cellular energy balance. May transport other mitochondrial metabolites having an aromatic nucleotide and phosphate groups, such as acetyl-CoA. Does not transport amino acids. The transport mechanism remains to be elucidated. The chain is Solute carrier family 25 member 47 from Mus musculus (Mouse).